The following is a 278-amino-acid chain: Acyl-[acyl-carrier-protein]--UDP-N-acetylglucosamine O-acyltransferase (278 aa).

This sequence belongs to the transferase hexapeptide repeat family. LpxA subfamily. In terms of assembly, homotrimer.

Its subcellular location is the cytoplasm. The enzyme catalyses a (3R)-hydroxyacyl-[ACP] + UDP-N-acetyl-alpha-D-glucosamine = a UDP-3-O-[(3R)-3-hydroxyacyl]-N-acetyl-alpha-D-glucosamine + holo-[ACP]. Its pathway is glycolipid biosynthesis; lipid IV(A) biosynthesis; lipid IV(A) from (3R)-3-hydroxytetradecanoyl-[acyl-carrier-protein] and UDP-N-acetyl-alpha-D-glucosamine: step 1/6. Involved in the biosynthesis of lipid A, a phosphorylated glycolipid that anchors the lipopolysaccharide to the outer membrane of the cell. This chain is Acyl-[acyl-carrier-protein]--UDP-N-acetylglucosamine O-acyltransferase, found in Brucella anthropi (strain ATCC 49188 / DSM 6882 / CCUG 24695 / JCM 21032 / LMG 3331 / NBRC 15819 / NCTC 12168 / Alc 37) (Ochrobactrum anthropi).